We begin with the raw amino-acid sequence, 26 residues long: Aldehyde dehydrogenase beta chain (26 aa).

As to quaternary structure, heterotrimer composed of an alpha, a beta and a gamma chain. FAD is required as a cofactor.

It catalyses the reaction an aldehyde + a quinone + H2O = a quinol + a carboxylate + H(+). This Amycolatopsis methanolica protein is Aldehyde dehydrogenase beta chain.